A 207-amino-acid polypeptide reads, in one-letter code: Protein lin-7 homolog B (207 aa).

Residues 1–13 (MAALVEPLGLERD) carry the Kinase interacting site motif. Residues 10 to 65 (LERDVSRAVELLERLQRSGELPPQKLQALQRVLQSRFCSAIREVYEQLYDTLDITG) enclose the L27 domain. Residues 93–175 (VVELPKTDEG…SVKLVVRYTP (83 aa)) enclose the PDZ domain. Residues 187–207 (KMRSARRRQQHHSYTSLESRG) form a disordered region. Residues 198 to 207 (HSYTSLESRG) are compositionally biased toward polar residues.

It belongs to the lin-7 family. As to quaternary structure, forms a complex with CASK and CASKIN1. Component of the brain-specific heterotrimeric complex (LIN-10-LIN-2-LIN-7 complex) composed of at least APBA1, CASK, and LIN7, which associates with the motor protein KIF17 to transport vesicles along microtubules. Forms a heterotrimeric complex composed of MMP5, LIN7B and PATJ; the N-terminal L27 domain of PALS1 interacts with the L27 domain of PATJ and the C-terminal L27 domain of PALS1 interacts with the L27 domain of LIN7B. Forms a heterotrimeric complex with DLG1 and CASK via their L27 domains. Interacts with DLG4 and GRIN2B as well as CDH1 and CTNNB1, the channels KCNJ12/Kir2.2, KCNJ4/Kir2.3 and probably KCNJ2/Kir2.1 and SLC6A12/BGT-1 via its PDZ domain. The association of LIN7A with cadherin and beta-catenin is calcium-dependent, occurs at synaptic junctions and requires the actin cytoskeleton. Interacts with EGFR, ERBB2, ERBB3 and ERBB4 with both PDZ and KID domains. Associates with KIF17 via APBA1. Interacts with ASIC3. Interacts with TOPK. Interacts with RTKN. Interacts with APBA1. Interacts with MPP7. Interacts with DLG2. Interacts with DLG3. Expressed in the kidney; predominantly in the vasa recta.

It localises to the cell membrane. Its subcellular location is the basolateral cell membrane. It is found in the cell junction. The protein resides in the postsynaptic density membrane. The protein localises to the tight junction. Its function is as follows. Plays a role in establishing and maintaining the asymmetric distribution of channels and receptors at the plasma membrane of polarized cells. Forms membrane-associated multiprotein complexes that may regulate delivery and recycling of proteins to the correct membrane domains. The tripartite complex composed of LIN7 (LIN7A, LIN7B or LIN7C), CASK and APBA1 associates with the motor protein KIF17 to transport vesicles containing N-methyl-D-aspartate (NMDA) receptor subunit NR2B along microtubules. This complex may have the potential to couple synaptic vesicle exocytosis to cell adhesion in brain. Ensures the proper localization of GRIN2B (subunit 2B of the NMDA receptor) to neuronal postsynaptic density and may function in localizing synaptic vesicles at synapses where it is recruited by beta-catenin and cadherin. Required to localize Kir2 channels, GABA transporter (SLC6A12) and EGFR/ERBB1, ERBB2, ERBB3 and ERBB4 to the basolateral membrane of epithelial cells. May increase the amplitude of ASIC3 acid-evoked currents by stabilizing the channel at the cell surface. This is Protein lin-7 homolog B (Lin7b) from Mus musculus (Mouse).